A 161-amino-acid chain; its full sequence is SsrA-binding protein (161 aa).

This sequence belongs to the SmpB family.

The protein localises to the cytoplasm. In terms of biological role, required for rescue of stalled ribosomes mediated by trans-translation. Binds to transfer-messenger RNA (tmRNA), required for stable association of tmRNA with ribosomes. tmRNA and SmpB together mimic tRNA shape, replacing the anticodon stem-loop with SmpB. tmRNA is encoded by the ssrA gene; the 2 termini fold to resemble tRNA(Ala) and it encodes a 'tag peptide', a short internal open reading frame. During trans-translation Ala-aminoacylated tmRNA acts like a tRNA, entering the A-site of stalled ribosomes, displacing the stalled mRNA. The ribosome then switches to translate the ORF on the tmRNA; the nascent peptide is terminated with the 'tag peptide' encoded by the tmRNA and targeted for degradation. The ribosome is freed to recommence translation, which seems to be the essential function of trans-translation. The sequence is that of SsrA-binding protein from Vibrio vulnificus (strain YJ016).